A 586-amino-acid chain; its full sequence is Assimilatory ferredoxin-dependent nitrite reductase (586 aa).

[4Fe-4S] cluster-binding residues include Cys411, Cys417, Cys455, and Cys459. Residue Cys459 coordinates siroheme. The interval 566 to 586 is disordered; it reads SWYPFADEDEPPKTEQPMTSD.

Belongs to the nitrite and sulfite reductase 4Fe-4S domain family. In terms of assembly, monomer. Siroheme serves as cofactor. Requires [4Fe-4S] cluster as cofactor.

The catalysed reaction is 6 oxidized [2Fe-2S]-[ferredoxin] + NH4(+) + 2 H2O = nitrite + 6 reduced [2Fe-2S]-[ferredoxin] + 8 H(+). It participates in nitrogen metabolism; nitrate reduction (assimilation). Its activity is regulated as follows. Inhibited by cyanide and azide. Its function is as follows. Catalyzes the reduction of nitrite to ammonium in the nitrate assimilation pathway, using ferredoxin as the electron donor. Can use reduced methyl viologen but neither NADPH nor NADH as electron donors. This chain is Assimilatory ferredoxin-dependent nitrite reductase, found in Haloferax mediterranei (strain ATCC 33500 / DSM 1411 / JCM 8866 / NBRC 14739 / NCIMB 2177 / R-4) (Halobacterium mediterranei).